A 255-amino-acid polypeptide reads, in one-letter code: 5-oxoprolinase subunit A (255 aa).

This sequence belongs to the LamB/PxpA family. As to quaternary structure, forms a complex composed of PxpA, PxpB and PxpC.

The enzyme catalyses 5-oxo-L-proline + ATP + 2 H2O = L-glutamate + ADP + phosphate + H(+). Catalyzes the cleavage of 5-oxoproline to form L-glutamate coupled to the hydrolysis of ATP to ADP and inorganic phosphate. This Rhodopseudomonas palustris (strain BisA53) protein is 5-oxoprolinase subunit A.